We begin with the raw amino-acid sequence, 363 residues long: p21-activated protein kinase-interacting protein 1-like (363 aa).

WD repeat units follow at residues 38-75, 78-116, 119-158, 200-238, and 241-282; these read AHTA…EHGA, HHNG…CQQT, AHKG…SAFI, NNPK…CVCE, and AHEN…VQTS. The segment at 309–363 is disordered; the sequence is KEKSNTAVTASAVKDCDRPKKKKAQNETTDKEASETQVVHKKRKPETKQKKKKPS. Residues 322–342 are compositionally biased toward basic and acidic residues; it reads KDCDRPKKKKAQNETTDKEAS. The span at 347–363 shows a compositional bias: basic residues; the sequence is VHKKRKPETKQKKKKPS.

Its subcellular location is the nucleus. It is found in the nucleolus. Negatively regulates the PAK1 kinase. PAK1 is a member of the PAK kinase family, which has been shown to play a positive role in the regulation of signaling pathways involving MAPK8 and RELA. PAK1 exists as an inactive homodimer, which is activated by binding of small GTPases such as CDC42 to an N-terminal regulatory domain. PAK1IP1 also binds to the N-terminus of PAK1, and inhibits the specific activation of PAK1 by CDC42. May be involved in ribosomal large subunit assembly. The polypeptide is p21-activated protein kinase-interacting protein 1-like (pak1ip1) (Xenopus laevis (African clawed frog)).